Reading from the N-terminus, the 186-residue chain is ATP synthase subunit b, chloroplastic (186 aa).

Residues 26-44 form a helical membrane-spanning segment; sequence ILETNLINLGVVIGTLLYF.

Belongs to the ATPase B chain family. In terms of assembly, F-type ATPases have 2 components, F(1) - the catalytic core - and F(0) - the membrane proton channel. F(1) has five subunits: alpha(3), beta(3), gamma(1), delta(1), epsilon(1). F(0) has four main subunits: a(1), b(1), b'(1) and c(10-14). The alpha and beta chains form an alternating ring which encloses part of the gamma chain. F(1) is attached to F(0) by a central stalk formed by the gamma and epsilon chains, while a peripheral stalk is formed by the delta, b and b' chains.

The protein resides in the plastid. The protein localises to the chloroplast thylakoid membrane. Its function is as follows. F(1)F(0) ATP synthase produces ATP from ADP in the presence of a proton or sodium gradient. F-type ATPases consist of two structural domains, F(1) containing the extramembraneous catalytic core and F(0) containing the membrane proton channel, linked together by a central stalk and a peripheral stalk. During catalysis, ATP synthesis in the catalytic domain of F(1) is coupled via a rotary mechanism of the central stalk subunits to proton translocation. In terms of biological role, component of the F(0) channel, it forms part of the peripheral stalk, linking F(1) to F(0). The polypeptide is ATP synthase subunit b, chloroplastic (Chara vulgaris (Common stonewort)).